We begin with the raw amino-acid sequence, 204 residues long: Holliday junction branch migration complex subunit RuvA (204 aa).

The interval 1 to 64 is domain I; that stretch reads MIGKLKGTLE…EEAIRLFGFA (64 aa). Positions 65–143 are domain II; the sequence is TRAEQEWFCM…PFEQAVKTVS (79 aa). Residues 144-154 form a flexible linker region; it reads VPQREITHQPA. The interval 154–204 is domain III; that stretch reads AHDALSALMKLGFEREQAARALALAMNALEGEAVSSALLIRHSLKLLSSPT.

It belongs to the RuvA family. Homotetramer. Forms an RuvA(8)-RuvB(12)-Holliday junction (HJ) complex. HJ DNA is sandwiched between 2 RuvA tetramers; dsDNA enters through RuvA and exits via RuvB. An RuvB hexamer assembles on each DNA strand where it exits the tetramer. Each RuvB hexamer is contacted by two RuvA subunits (via domain III) on 2 adjacent RuvB subunits; this complex drives branch migration. In the full resolvosome a probable DNA-RuvA(4)-RuvB(12)-RuvC(2) complex forms which resolves the HJ.

The protein localises to the cytoplasm. Its function is as follows. The RuvA-RuvB-RuvC complex processes Holliday junction (HJ) DNA during genetic recombination and DNA repair, while the RuvA-RuvB complex plays an important role in the rescue of blocked DNA replication forks via replication fork reversal (RFR). RuvA specifically binds to HJ cruciform DNA, conferring on it an open structure. The RuvB hexamer acts as an ATP-dependent pump, pulling dsDNA into and through the RuvAB complex. HJ branch migration allows RuvC to scan DNA until it finds its consensus sequence, where it cleaves and resolves the cruciform DNA. The protein is Holliday junction branch migration complex subunit RuvA of Bartonella tribocorum (strain CIP 105476 / IBS 506).